The primary structure comprises 161 residues: NADH-quinone oxidoreductase subunit I (161 aa).

4Fe-4S ferredoxin-type domains lie at 53-82 (RRYP…IEAE) and 92-121 (TRYD…EGPN). 8 residues coordinate [4Fe-4S] cluster: C62, C65, C68, C72, C101, C104, C107, and C111.

Belongs to the complex I 23 kDa subunit family. NDH-1 is composed of 14 different subunits. Subunits NuoA, H, J, K, L, M, N constitute the membrane sector of the complex. [4Fe-4S] cluster is required as a cofactor.

It is found in the cell inner membrane. The catalysed reaction is a quinone + NADH + 5 H(+)(in) = a quinol + NAD(+) + 4 H(+)(out). Its function is as follows. NDH-1 shuttles electrons from NADH, via FMN and iron-sulfur (Fe-S) centers, to quinones in the respiratory chain. The immediate electron acceptor for the enzyme in this species is believed to be ubiquinone. Couples the redox reaction to proton translocation (for every two electrons transferred, four hydrogen ions are translocated across the cytoplasmic membrane), and thus conserves the redox energy in a proton gradient. The protein is NADH-quinone oxidoreductase subunit I of Hyphomonas neptunium (strain ATCC 15444).